Reading from the N-terminus, the 253-residue chain is Electron transfer flavoprotein subunit beta, mitochondrial (253 aa).

This sequence belongs to the ETF beta-subunit/FixA family. In terms of assembly, heterodimer of an alpha and a beta subunit. It depends on FAD as a cofactor. AMP is required as a cofactor.

It is found in the mitochondrion matrix. Its function is as follows. The electron transfer flavoprotein serves as a specific electron acceptor for several dehydrogenases, including five acyl-CoA dehydrogenases, glutaryl-CoA and sarcosine dehydrogenase. It transfers the electrons to the main mitochondrial respiratory chain via ETF-ubiquinone oxidoreductase (ETF dehydrogenase). In Oryza sativa subsp. indica (Rice), this protein is Electron transfer flavoprotein subunit beta, mitochondrial (ETFB).